The sequence spans 431 residues: uncharacterized protein (431 aa).

A run of 11 helical transmembrane segments spans residues 33–53 (VARV…VIYL), 63–83 (FSVF…ANGL), 111–131 (VSGM…PLWS), 143–163 (VALL…LGML), 197–217 (LVGF…MLMT), 241–261 (AHSI…PVLL), 273–293 (GVVI…LTAM), 318–338 (LIGG…PWIM), 358–378 (AAAV…AAAL), 383–403 (SLGW…PLSL), and 407–427 (TVVA…VALA).

This sequence to M.tuberculosis Rv1510 and Rv3630.

The protein localises to the cell membrane. This is an uncharacterized protein from Mycobacterium bovis (strain ATCC BAA-935 / AF2122/97).